The sequence spans 290 residues: ATP synthase gamma chain (290 aa).

Belongs to the ATPase gamma chain family. As to quaternary structure, F-type ATPases have 2 components, CF(1) - the catalytic core - and CF(0) - the membrane proton channel. CF(1) has five subunits: alpha(3), beta(3), gamma(1), delta(1), epsilon(1). CF(0) has three main subunits: a, b and c.

It localises to the cell inner membrane. Its function is as follows. Produces ATP from ADP in the presence of a proton gradient across the membrane. The gamma chain is believed to be important in regulating ATPase activity and the flow of protons through the CF(0) complex. This is ATP synthase gamma chain from Dictyoglomus thermophilum (strain ATCC 35947 / DSM 3960 / H-6-12).